A 320-amino-acid polypeptide reads, in one-letter code: Methionyl-tRNA formyltransferase (320 aa).

114–117 (SLLP) provides a ligand contact to (6S)-5,6,7,8-tetrahydrofolate.

The protein belongs to the Fmt family.

The enzyme catalyses L-methionyl-tRNA(fMet) + (6R)-10-formyltetrahydrofolate = N-formyl-L-methionyl-tRNA(fMet) + (6S)-5,6,7,8-tetrahydrofolate + H(+). Its function is as follows. Attaches a formyl group to the free amino group of methionyl-tRNA(fMet). The formyl group appears to play a dual role in the initiator identity of N-formylmethionyl-tRNA by promoting its recognition by IF2 and preventing the misappropriation of this tRNA by the elongation apparatus. The chain is Methionyl-tRNA formyltransferase from Acinetobacter baumannii (strain ACICU).